The chain runs to 349 residues: Aspartate-semialdehyde dehydrogenase (349 aa).

NADP(+)-binding positions include 12-15 (TGSV) and 39-40 (NS). Arg-113 is a binding site for phosphate. Catalysis depends on Cys-148, which acts as the Acyl-thioester intermediate. Gln-175 contributes to the substrate binding site. 178 to 179 (SG) provides a ligand contact to NADP(+). Glu-201 serves as a coordination point for substrate. A phosphate-binding site is contributed by Lys-204. A substrate-binding site is contributed by Arg-234. The active-site Proton acceptor is His-241. 326–327 (NT) serves as a coordination point for NADP(+).

The protein belongs to the aspartate-semialdehyde dehydrogenase family. Homodimer.

It carries out the reaction L-aspartate 4-semialdehyde + phosphate + NADP(+) = 4-phospho-L-aspartate + NADPH + H(+). The protein operates within amino-acid biosynthesis; L-lysine biosynthesis via DAP pathway; (S)-tetrahydrodipicolinate from L-aspartate: step 2/4. Its pathway is amino-acid biosynthesis; L-methionine biosynthesis via de novo pathway; L-homoserine from L-aspartate: step 2/3. It participates in amino-acid biosynthesis; L-threonine biosynthesis; L-threonine from L-aspartate: step 2/5. Catalyzes the NADPH-dependent formation of L-aspartate-semialdehyde (L-ASA) by the reductive dephosphorylation of L-aspartyl-4-phosphate. This is Aspartate-semialdehyde dehydrogenase from Leptospira interrogans serogroup Icterohaemorrhagiae serovar copenhageni (strain Fiocruz L1-130).